The chain runs to 377 residues: Uroporphyrinogen decarboxylase (377 aa).

Substrate is bound by residues Arg-40–Arg-44, Asp-89, Tyr-169, Ser-224, and His-354.

The protein belongs to the uroporphyrinogen decarboxylase family. As to quaternary structure, homodimer.

The protein localises to the cytoplasm. It catalyses the reaction uroporphyrinogen III + 4 H(+) = coproporphyrinogen III + 4 CO2. It participates in porphyrin-containing compound metabolism; protoporphyrin-IX biosynthesis; coproporphyrinogen-III from 5-aminolevulinate: step 4/4. Catalyzes the decarboxylation of four acetate groups of uroporphyrinogen-III to yield coproporphyrinogen-III. This is Uroporphyrinogen decarboxylase from Leifsonia xyli subsp. xyli (strain CTCB07).